A 339-amino-acid chain; its full sequence is Ketol-acid reductoisomerase (NADP(+)) (339 aa).

Residues 1 to 182 (MRVYYDRDAD…GGGRSGIIET (182 aa)) form the KARI N-terminal Rossmann domain. NADP(+) is bound by residues 24-27 (YGSQ), K48, S51, T53, and 83-86 (DELQ). The active site involves H108. An NADP(+)-binding site is contributed by G134. Residues 183-328 (NFREECETDL…AKLRGMMPWI (146 aa)) form the KARI C-terminal knotted domain. D191, E195, E227, and E231 together coordinate Mg(2+). A substrate-binding site is contributed by S252.

This sequence belongs to the ketol-acid reductoisomerase family. The cofactor is Mg(2+).

It catalyses the reaction (2R)-2,3-dihydroxy-3-methylbutanoate + NADP(+) = (2S)-2-acetolactate + NADPH + H(+). It carries out the reaction (2R,3R)-2,3-dihydroxy-3-methylpentanoate + NADP(+) = (S)-2-ethyl-2-hydroxy-3-oxobutanoate + NADPH + H(+). Its pathway is amino-acid biosynthesis; L-isoleucine biosynthesis; L-isoleucine from 2-oxobutanoate: step 2/4. It participates in amino-acid biosynthesis; L-valine biosynthesis; L-valine from pyruvate: step 2/4. Involved in the biosynthesis of branched-chain amino acids (BCAA). Catalyzes an alkyl-migration followed by a ketol-acid reduction of (S)-2-acetolactate (S2AL) to yield (R)-2,3-dihydroxy-isovalerate. In the isomerase reaction, S2AL is rearranged via a Mg-dependent methyl migration to produce 3-hydroxy-3-methyl-2-ketobutyrate (HMKB). In the reductase reaction, this 2-ketoacid undergoes a metal-dependent reduction by NADPH to yield (R)-2,3-dihydroxy-isovalerate. This Rhizobium johnstonii (strain DSM 114642 / LMG 32736 / 3841) (Rhizobium leguminosarum bv. viciae) protein is Ketol-acid reductoisomerase (NADP(+)).